The sequence spans 198 residues: Carnitine operon protein CaiE (198 aa).

The tract at residues 179–198 is disordered; the sequence is VEENRPRLKGTTDVKPKSAQ. The span at 180–198 shows a compositional bias: basic and acidic residues; that stretch reads EENRPRLKGTTDVKPKSAQ.

The protein belongs to the transferase hexapeptide repeat family.

The protein operates within amine and polyamine metabolism; carnitine metabolism. Overproduction of CaiE stimulates the activity of CaiB and CaiD. The protein is Carnitine operon protein CaiE of Salmonella choleraesuis (strain SC-B67).